The sequence spans 590 residues: AT-rich interactive domain-containing protein 5A (590 aa).

Residues 1-52 (MAAPPAKGNTEQSEEGDLPQLPVSPKPDDEQSRSQSPTQLQDSPEAGGEQEE) are disordered. Positions 1–294 (MAAPPAKGNT…NKDIQDSPQN (294 aa)) are interaction with SOX9. Position 24 is a phosphoserine (Ser-24). The segment covering 33-42 (RSQSPTQLQD) has biased composition (polar residues). The ARID domain occupies 50–142 (QEEEQAFLVS…LVLPYVRHLK (93 aa)). Glycyl lysine isopeptide (Lys-Gly) (interchain with G-Cter in ubiquitin) cross-links involve residues Lys-80 and Lys-89. The disordered stretch occupies residues 141–229 (LKGEDDKPLP…SGPSPPLTGA (89 aa)). The segment covering 160–186 (MAKELRGDDGTTEKLKKAKDSEERRVE) has biased composition (basic and acidic residues). Residues 187–210 (QTTPGKTKSDATGQTQLPCQGSSR) are compositionally biased toward polar residues. 2 positions are modified to phosphoserine: Ser-253 and Ser-283. Disordered regions lie at residues 275–323 (EGCR…RMEA), 367–402 (GPPGKEEGPTTKESHLVWGGDANHPSAFHKGSTRKR), and 419–443 (VPTERPGAPSPHPSSPGLGSKRGLE). Residues 367-381 (GPPGKEEGPTTKESH) are compositionally biased toward basic and acidic residues. 2 positions are modified to phosphoserine: Ser-433 and Ser-458.

As to quaternary structure, interacts with SOX9. Interacts with ESR1. Interacts with RORC. Phosphorylated by MAPK14 on serine residues involving a TLR4 signaling pathway upon lipopolysaccharide (LPS) stimulation leading to its ubiquitination and proteasomal degradation. In terms of processing, ubiquitinated leading to proteasomal degradation; involving WWP1 linked to MAPK14-mediated phosphorylation upon LPS stimulation. In terms of tissue distribution, expressed in T cells (at protein level). Expressed at high levels in cartilage, heart, testis and bone.

The protein resides in the nucleus. Functionally, DNA-binding protein that may regulate transcription and act as a repressor by binding to AT-rich stretches in the promoter region of target genes. May positively regulate chondrocyte-specific transcription such as of COL2A1 in collaboration with SOX9 and positively regulate histone H3 acetylation at chondrocyte-specific genes. May stimulate early-stage chondrocyte differentiation and inhibit later stage differention. Can repress ESR1-mediated transcriptional activation; proposed to act as corepressor for selective nuclear hormone receptors. As an RNA-binding protein, involved in the regulation of inflammatory response by stabilizing selective inflammation-related mRNAs, such as STAT3 and TBX21. Also stabilizes IL6 mRNA. Binds to stem loop structures located in the 3'UTRs of IL6, STAT3 and TBX21 mRNAs; at least for STAT3 prevents binding of ZC3H12A to the mRNA stem loop structure thus inhibiting its degradation activity. Contributes to elevated IL6 levels possibly implicated in autoimmunity processes. IL6-dependent stabilization of STAT3 mRNA may promote differentiation of naive CD4+ T-cells into T-helper Th17 cells. In CD4+ T-cells may also inhibit RORC-induced Th17 cell differentiation independently of IL6 signaling. Stabilization of TBX21 mRNA contributes to elevated interferon-gamma secretion in Th1 cells possibly implicated in the establishment of septic shock. Stabilizes TNFRSF4/OX40 mRNA by binding to the conserved stem loop structure in its 3'UTR; thereby competing with the mRNA-destabilizing functions of RC3H1 and endoribonuclease ZC3H12A. This chain is AT-rich interactive domain-containing protein 5A (Arid5a), found in Mus musculus (Mouse).